A 98-amino-acid polypeptide reads, in one-letter code: Citrate lyase acyl carrier protein (98 aa).

Ser14 is modified (O-(phosphoribosyl dephospho-coenzyme A)serine).

Belongs to the CitD family. In terms of assembly, oligomer with a subunit composition of (alpha,beta,gamma)6.

Its subcellular location is the cytoplasm. In terms of biological role, covalent carrier of the coenzyme of citrate lyase. The sequence is that of Citrate lyase acyl carrier protein from Vibrio cholerae serotype O1 (strain ATCC 39315 / El Tor Inaba N16961).